The chain runs to 840 residues: Probable alpha-glucuronidase A (840 aa).

An N-terminal signal peptide occupies residues 1–19 (MRSVITTLTLVASVGLAVA). N-linked (GlcNAc...) asparagine glycosylation is found at Asn-222, Asn-310, Asn-465, Asn-527, Asn-576, Asn-682, and Asn-732.

The protein belongs to the glycosyl hydrolase 67 family.

Its subcellular location is the secreted. It carries out the reaction an alpha-D-glucuronoside + H2O = D-glucuronate + an alcohol. Alpha-glucuronidase involved in the hydrolysis of xylan, a major structural heterogeneous polysaccharide found in plant biomass representing the second most abundant polysaccharide in the biosphere, after cellulose. Releases 4-O-methylglucuronic acid from xylan. The sequence is that of Probable alpha-glucuronidase A (aguA) from Aspergillus clavatus (strain ATCC 1007 / CBS 513.65 / DSM 816 / NCTC 3887 / NRRL 1 / QM 1276 / 107).